Here is a 254-residue protein sequence, read N- to C-terminus: Mitochondrial inner membrane protease ATP23 homolog (254 aa).

The tract at residues 1–32 (MAQSGAKAADLSREPPGEQKPSPSSRQNEEDL) is disordered. Position 133 (His133) interacts with a divalent metal cation. Glu134 is an active-site residue. An a divalent metal cation-binding site is contributed by His137.

It belongs to the peptidase M76 family.

This Danio rerio (Zebrafish) protein is Mitochondrial inner membrane protease ATP23 homolog (atp23).